The chain runs to 68 residues: uncharacterized protein (68 aa).

The segment at 1-42 is disordered; it reads MHLCQNGHYYKPHRASAEKVPYLKKKKKNSRNEGKAKKKNEK.

This is an uncharacterized protein from Saccharomyces cerevisiae (strain ATCC 204508 / S288c) (Baker's yeast).